We begin with the raw amino-acid sequence, 473 residues long: Photosystem II CP43 reaction center protein (473 aa).

The propeptide occupies 1–14 (MKTLYSRRRFYHVE). Thr-15 carries the N-acetylthreonine modification. Thr-15 is subject to Phosphothreonine. Helical transmembrane passes span 69–93 (LFEVAHFVPEKPMYEQGLILLPHLA), 134–155 (LLGPETLEESFPFFGYVWKDRN), 178–200 (KALYFGGVYDTWAPGGGDVRKIT), 255–275 (KPFAWARRALVWSGEAYLSYS), and 291–312 (WFNNTAYPSEFYGPTGPEASQA). Glu-367 contacts [CaMn4O5] cluster. Residues 447-471 (RARAAAAGFEKGIDRDFEPVLSMTP) traverse the membrane as a helical segment.

The protein belongs to the PsbB/PsbC family. PsbC subfamily. PSII is composed of 1 copy each of membrane proteins PsbA, PsbB, PsbC, PsbD, PsbE, PsbF, PsbH, PsbI, PsbJ, PsbK, PsbL, PsbM, PsbT, PsbX, PsbY, PsbZ, Psb30/Ycf12, at least 3 peripheral proteins of the oxygen-evolving complex and a large number of cofactors. It forms dimeric complexes. Binds multiple chlorophylls and provides some of the ligands for the Ca-4Mn-5O cluster of the oxygen-evolving complex. It may also provide a ligand for a Cl- that is required for oxygen evolution. PSII binds additional chlorophylls, carotenoids and specific lipids. is required as a cofactor.

It is found in the plastid. It localises to the chloroplast thylakoid membrane. One of the components of the core complex of photosystem II (PSII). It binds chlorophyll and helps catalyze the primary light-induced photochemical processes of PSII. PSII is a light-driven water:plastoquinone oxidoreductase, using light energy to abstract electrons from H(2)O, generating O(2) and a proton gradient subsequently used for ATP formation. The polypeptide is Photosystem II CP43 reaction center protein (Solanum bulbocastanum (Wild potato)).